Consider the following 615-residue polypeptide: MSGKAQQQSRLKELISRGREQGYLTYAEVNDHLPEDISDPEQVEDIIRMINDMGINVFESAPDADALLLAEADTDEAAAEEAAAALAAVETDIGRTTDPVRMYMREMGTVELLTREGEIEIAKRIEEGIREVMGAIAHFPGTVDHILSEYTRVTTEGGRLSDVLSGYIDPDDGITPPAAEVPPPVDTKTAKADDDSEDEEAEATEDEEEAESGPDPVIAAQRFGAVADQMEVTRKALKKHGRENKQAIAEMLALAELFMPIKLVPKQFEGLVERVRSALDRLRQQERAIMQLCVRDARMPRADFLRQFPGNEVDESWTDALAKGKSKYAEAIARLQPDIIRCQQKLTALEVETGLKIAEIKDINRRMSIGEAKARRAKKEMVEANLRLVISIAKKYTNRGLQFLDLIQEGNIGLMKAVDKFEYRRGYKFSTYATWWIRQAITRSIADQARTIRIPVHMIETINKLNRISRQMLQEMGREPTPEELGERMEMPEDKIRKVLKIAKEPISMETPIGDDEDSHLGDFIEDSTMQSPIDVATVESLKEATREVLSGLTAREAKVLRMRFGIDMNTDHTLEEVGKQFDVTRERIRQIEAKALRKLRHPTRSEHLRSFLDE.

A disordered region spans residues 166–216 (GYIDPDDGITPPAAEVPPPVDTKTAKADDDSEDEEAEATEDEEEAESGPDP). Over residues 194–212 (DDSEDEEAEATEDEEEAES) the composition is skewed to acidic residues. A sigma-70 factor domain-2 region spans residues 381-451 (MVEANLRLVI…TRSIADQART (71 aa)). The Interaction with polymerase core subunit RpoC signature appears at 405 to 408 (DLIQ). A sigma-70 factor domain-3 region spans residues 460 to 536 (ETINKLNRIS…DSTMQSPIDV (77 aa)). Residues 549-602 (VLSGLTAREAKVLRMRFGIDMNTDHTLEEVGKQFDVTRERIRQIEAKALRKLRH) form a sigma-70 factor domain-4 region. Residues 575–594 (LEEVGKQFDVTRERIRQIEA) constitute a DNA-binding region (H-T-H motif).

The protein belongs to the sigma-70 factor family. RpoD/SigA subfamily. As to quaternary structure, interacts transiently with the RNA polymerase catalytic core.

The protein localises to the cytoplasm. Functionally, sigma factors are initiation factors that promote the attachment of RNA polymerase to specific initiation sites and are then released. This sigma factor is the primary sigma factor during exponential growth. The sequence is that of RNA polymerase sigma factor RpoD from Pseudomonas protegens (strain DSM 19095 / LMG 27888 / CFBP 6595 / CHA0).